A 160-amino-acid chain; its full sequence is Major strawberry allergen Fra a 1.08 (160 aa).

The protein belongs to the BetVI family. In terms of processing, phosphorylated in vivo. Phosphorylation prevents its activity as ribonuclease. In terms of tissue distribution, highly expressed in roots. Expressed a low levels in ripe red fruits.

Its function is as follows. Possesses ribonuclease activity in vitro. The polypeptide is Major strawberry allergen Fra a 1.08 (Fragaria ananassa (Strawberry)).